The primary structure comprises 97 residues: YcgL domain-containing protein Pfl01_1389 (97 aa).

Residues Arg3–Pro87 enclose the YcgL domain.

The protein is YcgL domain-containing protein Pfl01_1389 of Pseudomonas fluorescens (strain Pf0-1).